Consider the following 270-residue polypeptide: Glutamate racemase (270 aa).

Residues 10–11 (DS) and 42–43 (YG) contribute to the substrate site. Cys74 acts as the Proton donor/acceptor in catalysis. Substrate is bound at residue 75-76 (NT). The active-site Proton donor/acceptor is Cys189. 190 to 191 (TH) lines the substrate pocket.

It belongs to the aspartate/glutamate racemases family.

The enzyme catalyses L-glutamate = D-glutamate. It participates in cell wall biogenesis; peptidoglycan biosynthesis. Provides the (R)-glutamate required for cell wall biosynthesis. In Bartonella henselae (strain ATCC 49882 / DSM 28221 / CCUG 30454 / Houston 1) (Rochalimaea henselae), this protein is Glutamate racemase.